Reading from the N-terminus, the 467-residue chain is UDP-N-acetylmuramate--L-alanine ligase (467 aa).

Residue 112–118 (GTHGKTT) participates in ATP binding.

It belongs to the MurCDEF family.

The protein localises to the cytoplasm. It catalyses the reaction UDP-N-acetyl-alpha-D-muramate + L-alanine + ATP = UDP-N-acetyl-alpha-D-muramoyl-L-alanine + ADP + phosphate + H(+). The protein operates within cell wall biogenesis; peptidoglycan biosynthesis. Its function is as follows. Cell wall formation. The polypeptide is UDP-N-acetylmuramate--L-alanine ligase (Paraburkholderia phytofirmans (strain DSM 17436 / LMG 22146 / PsJN) (Burkholderia phytofirmans)).